The following is a 560-amino-acid chain: DNA ligase B (560 aa).

Lysine 124 serves as the catalytic N6-AMP-lysine intermediate.

The protein belongs to the NAD-dependent DNA ligase family. LigB subfamily.

The catalysed reaction is NAD(+) + (deoxyribonucleotide)n-3'-hydroxyl + 5'-phospho-(deoxyribonucleotide)m = (deoxyribonucleotide)n+m + AMP + beta-nicotinamide D-nucleotide.. Its function is as follows. Catalyzes the formation of phosphodiester linkages between 5'-phosphoryl and 3'-hydroxyl groups in double-stranded DNA using NAD as a coenzyme and as the energy source for the reaction. In Escherichia coli (strain K12 / DH10B), this protein is DNA ligase B.